Here is a 403-residue protein sequence, read N- to C-terminus: Probable protein phosphatase 2C 8 (403 aa).

Positions 42–80 (LGRTASAVAEDDAAKRVRPASDSSSDSSESAKVAPEPTA) are disordered. A compositionally biased stretch (low complexity) spans 62-71 (SDSSSDSSES). The PPM-type phosphatase domain occupies 90 to 388 (SHGAVSVIGR…DNISVVVVEL (299 aa)). The Mn(2+) site is built by D144, G145, D325, and D379.

Belongs to the PP2C family. Mg(2+) serves as cofactor. It depends on Mn(2+) as a cofactor.

It catalyses the reaction O-phospho-L-seryl-[protein] + H2O = L-seryl-[protein] + phosphate. It carries out the reaction O-phospho-L-threonyl-[protein] + H2O = L-threonyl-[protein] + phosphate. The protein is Probable protein phosphatase 2C 8 of Oryza sativa subsp. japonica (Rice).